The sequence spans 721 residues: Teichoic acid poly(glycerol phosphate) polymerase (721 aa).

CDP-glycerol-binding positions include 443 to 447 (WHGTP), Arg-511, 545 to 546 (PT), 582 to 584 (RMH), 624 to 625 (SS), and Asp-629.

Belongs to the CDP-glycerol glycerophosphotransferase family.

The protein resides in the cell membrane. It catalyses the reaction 4-O-[(2R)-glycerylphospho]-N-acetyl-beta-D-mannosaminyl-(1-&gt;4)-N-acetyl-alpha-D-glucosaminyl di-trans,octa-cis-undecaprenyl diphosphate + n CDP-glycerol = 4-O-{[(2R)-1-glycerylphospho](n)-(2R)-1-glycerylphospho}-N-acetyl-beta-D-mannosaminyl-(1-&gt;4)-N-acetyl-alpha-D-glucosaminyl undecaprenyl diphosphate + n CMP + n H(+). It functions in the pathway cell wall biogenesis; poly(glycerol phosphate) teichoic acid biosynthesis. Responsible for the polymerization of the main chain of the major teichoic acid by sequential transfer of glycerol phosphate units from CDP-glycerol to the disaccharide linkage unit. Synthesizes polymers of approximately 35 glycerol phosphate units in length. The chain is Teichoic acid poly(glycerol phosphate) polymerase from Staphylococcus epidermidis (strain ATCC 35984 / DSM 28319 / BCRC 17069 / CCUG 31568 / BM 3577 / RP62A).